A 271-amino-acid polypeptide reads, in one-letter code: Ubiquitin thioesterase OTUB1 (271 aa).

Position 2 is an N-acetylalanine (Ala-2). Ser-16 is modified (phosphoserine). Position 26 is a phosphotyrosine (Tyr-26). The OTU domain maps to Ser-80–Lys-271. The active site involves Asp-88. Cys-91 functions as the Nucleophile in the catalytic mechanism. Ubiquitin-conjugating enzyme E2 binding stretches follow at residues Phe-130 to Phe-138 and Asp-169 to Leu-177. The segment at Phe-189–Glu-195 is free ubiquitin binding. A ubiquitin-conjugating enzyme E2 binding region spans residues Gln-206 to Lys-213. Free ubiquitin binding stretches follow at residues Glu-214 to Ile-221 and Asn-245 to Glu-251. Residue His-265 is part of the active site.

It belongs to the peptidase C65 family. Interacts with RNF128. Forms a ternary complex with RNF128 and USP8. Interacts with FUS and RACK1. Interacts with UBE2D1/UBCH5A, UBE2W/UBC16 and UBE2N/UBC13. Post-translationally, phosphorylation at Tyr-26 by SRC and SRMS promotes deubiquitination of RPTOR via a non-catalytic process.

The protein localises to the cytoplasm. It catalyses the reaction Thiol-dependent hydrolysis of ester, thioester, amide, peptide and isopeptide bonds formed by the C-terminal Gly of ubiquitin (a 76-residue protein attached to proteins as an intracellular targeting signal).. By free ubiquitin: binding of free ubiquitin triggers conformational changes in the OTU domain and formation of a ubiquitin-binding helix in the N-terminus, promoting binding of the conjugated donor ubiquitin in UBE2N/UBC13 to OTUB1. Its function is as follows. Hydrolase that can specifically remove compared to 'Lys-48'-linked conjugated ubiquitin from proteins and plays an important regulatory role at the level of protein turnover by preventing degradation. Regulator of T-cell anergy, a phenomenon that occurs when T-cells are rendered unresponsive to antigen rechallenge and no longer respond to their cognate antigen. Acts via its interaction with RNF128/GRAIL. Surprisingly, it regulates RNF128-mediated ubiquitination, but does not deubiquitinate polyubiquitinated RNF128. Deubiquitinates estrogen receptor alpha (ESR1). Mediates deubiquitination of 'Lys-48'-linked polyubiquitin chains, but not 'Lys-63'-linked polyubiquitin chains. Not able to cleave di-ubiquitin. Also capable of removing NEDD8 from NEDD8 conjugates, but with a much lower preference compared to 'Lys-48'-linked ubiquitin. Functionally, plays a key non-catalytic role in DNA repair regulation by inhibiting activity of RNF168, an E3 ubiquitin-protein ligase that promotes accumulation of 'Lys-63'-linked histone H2A and H2AX at DNA damage sites. Inhibits RNF168 independently of ubiquitin thioesterase activity by binding and inhibiting UBE2N/UBC13, the E2 partner of RNF168, thereby limiting spreading of 'Lys-63'-linked histone H2A and H2AX marks. Inhibition occurs by binding to free ubiquitin: free ubiquitin acts as an allosteric regulator that increases affinity for UBE2N/UBC13 and disrupts interaction with UBE2V1. The OTUB1-UBE2N/UBC13-free ubiquitin complex adopts a configuration that mimics a cleaved 'Lys48'-linked di-ubiquitin chain. Acts as a regulator of mTORC1 and mTORC2 complexes. When phosphorylated at Tyr-26, acts as an activator of the mTORC1 complex by mediating deubiquitination of RPTOR via a non-catalytic process: acts by binding and inhibiting the activity of the ubiquitin-conjugating enzyme E2 (UBE2D1/UBCH5A, UBE2W/UBC16 and UBE2N/UBC13), thereby preventing ubiquitination of RPTOR. Can also act as an inhibitor of the mTORC1 and mTORC2 complexes in response to amino acids by mediating non-catalytic deubiquitination of DEPTOR. This is Ubiquitin thioesterase OTUB1 (Otub1) from Mus musculus (Mouse).